We begin with the raw amino-acid sequence, 250 residues long: Ubiquinone/menaquinone biosynthesis C-methyltransferase UbiE (250 aa).

S-adenosyl-L-methionine contacts are provided by residues T74, D94, 122–123 (DA), and S139.

It belongs to the class I-like SAM-binding methyltransferase superfamily. MenG/UbiE family.

The catalysed reaction is a 2-demethylmenaquinol + S-adenosyl-L-methionine = a menaquinol + S-adenosyl-L-homocysteine + H(+). It catalyses the reaction a 2-methoxy-6-(all-trans-polyprenyl)benzene-1,4-diol + S-adenosyl-L-methionine = a 5-methoxy-2-methyl-3-(all-trans-polyprenyl)benzene-1,4-diol + S-adenosyl-L-homocysteine + H(+). The protein operates within quinol/quinone metabolism; menaquinone biosynthesis; menaquinol from 1,4-dihydroxy-2-naphthoate: step 2/2. It participates in cofactor biosynthesis; ubiquinone biosynthesis. In terms of biological role, methyltransferase required for the conversion of demethylmenaquinol (DMKH2) to menaquinol (MKH2) and the conversion of 2-polyprenyl-6-methoxy-1,4-benzoquinol (DDMQH2) to 2-polyprenyl-3-methyl-6-methoxy-1,4-benzoquinol (DMQH2). The sequence is that of Ubiquinone/menaquinone biosynthesis C-methyltransferase UbiE from Paracoccus denitrificans (strain Pd 1222).